We begin with the raw amino-acid sequence, 212 residues long: Thymidylate kinase (212 aa).

7 to 14 (GIEGCGKS) contributes to the ATP binding site.

Belongs to the thymidylate kinase family.

It catalyses the reaction dTMP + ATP = dTDP + ADP. Its function is as follows. Phosphorylation of dTMP to form dTDP in both de novo and salvage pathways of dTTP synthesis. The protein is Thymidylate kinase of Trichlorobacter lovleyi (strain ATCC BAA-1151 / DSM 17278 / SZ) (Geobacter lovleyi).